Here is a 351-residue protein sequence, read N- to C-terminus: uncharacterized protein (351 aa).

A signal peptide spans 1 to 27; that stretch reads MKNKKRVLIASSLSCAILLLSAATTQA. A disordered region spans residues 29-71; that stretch reads SAHKDSQDQNKKEHVDKSQQKDKRNVTNKDKNSTVPDDIGKNG. Basic and acidic residues predominate over residues 30–60; the sequence is AHKDSQDQNKKEHVDKSQQKDKRNVTNKDKN.

This sequence belongs to the aerolysin family.

This is an uncharacterized protein from Staphylococcus aureus (strain Mu50 / ATCC 700699).